The primary structure comprises 124 residues: Small ribosomal subunit protein uS12 (124 aa).

Aspartate 89 bears the 3-methylthioaspartic acid mark. The interval 101–124 (TLDTSGVKDRRQSRSKYGAKAPKE) is disordered.

It belongs to the universal ribosomal protein uS12 family. As to quaternary structure, part of the 30S ribosomal subunit. Contacts proteins S8 and S17. May interact with IF1 in the 30S initiation complex.

Functionally, with S4 and S5 plays an important role in translational accuracy. Its function is as follows. Interacts with and stabilizes bases of the 16S rRNA that are involved in tRNA selection in the A site and with the mRNA backbone. Located at the interface of the 30S and 50S subunits, it traverses the body of the 30S subunit contacting proteins on the other side and probably holding the rRNA structure together. The combined cluster of proteins S8, S12 and S17 appears to hold together the shoulder and platform of the 30S subunit. This Synechococcus sp. (strain CC9902) protein is Small ribosomal subunit protein uS12.